A 189-amino-acid chain; its full sequence is Putative manganese efflux pump MntP (189 aa).

6 consecutive transmembrane segments (helical) span residues 3–23 (PVATLFLAFAMSTDAFAAAIG), 41–61 (LIFGVIEALTPLVGWFLGKAA), 62–82 (AQYVSAWDHWIAFSLLLVLGA), 104–124 (FWLLALTGFATSIDAMAVGAG), 132–152 (IYSTAAAIGLATMAMVTIGVM), and 168–188 (AGGIVLIGIGSTILAEHLNIF).

Belongs to the MntP (TC 9.B.29) family.

It is found in the cell inner membrane. Probably functions as a manganese efflux pump. This Paraburkholderia phytofirmans (strain DSM 17436 / LMG 22146 / PsJN) (Burkholderia phytofirmans) protein is Putative manganese efflux pump MntP.